The chain runs to 421 residues: MRYYRITIIRFINKYTKIMDWIESDSYLKGIINNKPKLHDPVRVASFDLDDTLIVRSKKTQKWKLVDSSIKQKIAELIENKYIIIVFTNQGGMSLNKKFDKPLWRKAMDDLVKILTSETDNDFYFAIYVAKKYDIYRKPNIGLWNLMKQDIKDEFNLDSVQISTKSFFCGDAAGRIYPSMFKKKLYPTSKGGDFSDTDRKFALNIGIKFLTPEEFYLDSKNSENLKTNYKLSGVNPTEIIDEIENTKLVNYKFKPRKKEMIVMIGQPGSGKSFFVKNYILPNGYVHINQDKCKTKAKCLSETENALSKGKSVVIDNTNPDVISRMTYTNLAKENNYDHVRAIIMETPDELAKHLNNVRHIYSSGTVPKVTDIAYNIYRKNFVLPQYEENFDKIETVTFYFDKSMLDDPKWKRSFMKFSEYK.

Residues 25-231 (DSYLKGIINN…SENLKTNYKL (207 aa)) are phosphatase. A kinase region spans residues 235-415 (NPTEIIDEIE…DDPKWKRSFM (181 aa)). Position 265 to 272 (265 to 272 (GQPGSGKS)) interacts with ATP.

In the N-terminal section; belongs to the DNA 3' phosphatase family.

The enzyme catalyses a 3'end (2'-deoxyribonucleotide 3'-phosphate)-DNA + H2O = a 3'-end 2'-deoxyribonucleotide-DNA + phosphate. The catalysed reaction is a 5'-end dephospho-2'-deoxyribonucleoside-DNA + ATP = a 5'-end 5'-phospho-2'-deoxyribonucleoside-DNA + ADP + H(+). The protein is Putative bifunctional polynucleotide phosphatase/kinase of Acanthamoeba polyphaga mimivirus (APMV).